The sequence spans 2294 residues: Protein Ycf2 (2294 aa).

Position 1635–1642 (1635–1642 (GSIGTGRS)) interacts with ATP.

It belongs to the Ycf2 family.

It is found in the plastid. The protein localises to the chloroplast stroma. Functionally, probable ATPase of unknown function. Its presence in a non-photosynthetic plant (Epifagus virginiana) and experiments in tobacco indicate that it has an essential function which is probably not related to photosynthesis. The protein is Protein Ycf2 of Ranunculus macranthus (Large buttercup).